Consider the following 377-residue polypeptide: 3-dehydroquinate synthase (377 aa).

NAD(+) contacts are provided by residues 115-119 (GVIGD), 139-140 (TS), K152, and K161. Zn(2+)-binding residues include E194, H256, and H275.

The protein belongs to the sugar phosphate cyclases superfamily. Dehydroquinate synthase family. It depends on NAD(+) as a cofactor. Co(2+) is required as a cofactor. Requires Zn(2+) as cofactor.

Its subcellular location is the cytoplasm. The catalysed reaction is 7-phospho-2-dehydro-3-deoxy-D-arabino-heptonate = 3-dehydroquinate + phosphate. Its pathway is metabolic intermediate biosynthesis; chorismate biosynthesis; chorismate from D-erythrose 4-phosphate and phosphoenolpyruvate: step 2/7. Catalyzes the conversion of 3-deoxy-D-arabino-heptulosonate 7-phosphate (DAHP) to dehydroquinate (DHQ). This chain is 3-dehydroquinate synthase, found in Agrobacterium fabrum (strain C58 / ATCC 33970) (Agrobacterium tumefaciens (strain C58)).